Reading from the N-terminus, the 586-residue chain is Serine/threonine-protein phosphatase 2A 56 kDa regulatory subunit delta isoform (586 aa).

A disordered region spans residues 1-80 (MSPSPSSSGK…QSSSRFNLSK (80 aa)). 6 consecutive repeat copies span residues 21-22 (QP), 23-24 (QP), 25-26 (QP), 27-28 (QP), 29-30 (QP), and 31-32 (QP). Positions 21–36 (QPQPQPQPQPQPQSQP) are 8 X 2 AA approximate tandem repeats of Q-P. A compositionally biased stretch (pro residues) spans 23–35 (QPQPQPQPQPQSQ). A 7; approximate repeat occupies 33–34 (QS). Repeat unit 8 spans residues 35-36 (QP). The span at 36 to 45 (PPSSNKRPSN) shows a compositional bias: low complexity. The residue at position 47 (T47) is a Phosphothreonine. 3 positions are modified to phosphoserine: S72, S73, and S74. The short motif at 507 to 514 (RAPPPLPP) is the SH3-binding; class I element. The Nuclear localization signal signature appears at 532–549 (KRTVETEAVQMLKDIKKE). S557 and S582 each carry phosphoserine.

The protein belongs to the phosphatase 2A regulatory subunit B56 family. In terms of assembly, PP2A consists of a common heterodimeric core enzyme, composed of a 36 kDa catalytic subunit (subunit C) and a 65 kDa constant regulatory subunit (PR65 or subunit A), that associates with a variety of regulatory subunits. Proteins that associate with the core dimer include three families of regulatory subunits B (the R2/B/PR55/B55, R3/B''/PR72/PR130/PR59 and R5/B'/B56 families), the 48 kDa variable regulatory subunit, viral proteins, and cell signaling molecules. Interacts with the PP2A A subunit PPP2R1A. Interacts with SGO1. Interacts with ADCY8. Highly expressed in brain.

The protein resides in the nucleus. In terms of biological role, the B regulatory subunit might modulate substrate selectivity and catalytic activity, and might also direct the localization of the catalytic enzyme to a particular subcellular compartment. This is Serine/threonine-protein phosphatase 2A 56 kDa regulatory subunit delta isoform (PPP2R5D) from Oryctolagus cuniculus (Rabbit).